The following is a 398-amino-acid chain: 1,4-beta-D-glucan cellobiohydrolase CEL6C (398 aa).

Residues 1-18 (MKITSSAAALALVASAVA) form the signal peptide. N-linked (GlcNAc...) asparagine glycosylation is present at Asn70. Asp125 is an active-site residue. The active-site Proton donor is Asp170. Residues Trp218, Trp318, Lys346, and Glu350 each contribute to the substrate site.

It belongs to the glycosyl hydrolase 6 (cellulase B) family. Both N- and O-glycosylated.

It is found in the secreted. The catalysed reaction is Hydrolysis of (1-&gt;4)-beta-D-glucosidic linkages in cellulose and cellotetraose, releasing cellobiose from the non-reducing ends of the chains.. In terms of biological role, exoglucanase that plays an important function in biomass degradation by catalyzing the hydrolysis of the non-reducing end beta-1,4-glucosidic linkages in cellulose and cellotetraose to release cellobiose. Hydrolyzes crystalline and amorphous cellulose but is inactive on hydroxyethyl cellulose, mannan, galactomannan, xyloglucan, arabinoxylan, arabinan, xylan, and pectin. In Podospora anserina (strain S / ATCC MYA-4624 / DSM 980 / FGSC 10383) (Pleurage anserina), this protein is 1,4-beta-D-glucan cellobiohydrolase CEL6C.